We begin with the raw amino-acid sequence, 268 residues long: Type II methyltransferase M2.DpnII (268 aa).

The protein belongs to the N(4)/N(6)-methyltransferase family. In terms of assembly, homodimer.

The enzyme catalyses a 2'-deoxyadenosine in DNA + S-adenosyl-L-methionine = an N(6)-methyl-2'-deoxyadenosine in DNA + S-adenosyl-L-homocysteine + H(+). Its function is as follows. A beta subtype methylase that recognizes the single- or double-stranded sequence 5'-GATC-3', methylates A-2 on one or both strands (respectively), and protects the DNA from cleavage by the DpnII endonuclease. Further methylates DNA that is already methylated at 5'-GATC-3' sites. Essential for establishment of a previously unmethylated plasmid transformed into the cell as single-stranded DNA, enhances plasmid transfer to DpnII-containing strains of Streptococcus pneumoniae. The sequence is that of Type II methyltransferase M2.DpnII from Streptococcus pneumoniae.